The primary structure comprises 37 residues: MKVRASIKRICRECKLIKRHGVNRIICVNPKHKQRQG.

It belongs to the bacterial ribosomal protein bL36 family.

This Metamycoplasma arthritidis (strain 158L3-1) (Mycoplasma arthritidis) protein is Large ribosomal subunit protein bL36.